The sequence spans 698 residues: Elongation factor G (698 aa).

Residues Glu-8–Val-290 enclose the tr-type G domain. Residues Ala-17–Thr-24, Asp-88–His-92, and Asn-142–Asp-145 contribute to the GTP site.

Belongs to the TRAFAC class translation factor GTPase superfamily. Classic translation factor GTPase family. EF-G/EF-2 subfamily.

The protein resides in the cytoplasm. In terms of biological role, catalyzes the GTP-dependent ribosomal translocation step during translation elongation. During this step, the ribosome changes from the pre-translocational (PRE) to the post-translocational (POST) state as the newly formed A-site-bound peptidyl-tRNA and P-site-bound deacylated tRNA move to the P and E sites, respectively. Catalyzes the coordinated movement of the two tRNA molecules, the mRNA and conformational changes in the ribosome. The sequence is that of Elongation factor G from Aromatoleum aromaticum (strain DSM 19018 / LMG 30748 / EbN1) (Azoarcus sp. (strain EbN1)).